Reading from the N-terminus, the 120-residue chain is Alanine racemase (120 aa).

The active-site Proton acceptor; specific for L-alanine is Tyr24.

Belongs to the alanine racemase family. In terms of assembly, homodimer. The cofactor is pyridoxal 5'-phosphate.

It carries out the reaction L-alanine = D-alanine. Highly specific to D- and L-alanine and does not catalyze the racemization of other amino acids. The sequence is that of Alanine racemase from Penaeus monodon (Giant tiger prawn).